The following is a 261-amino-acid chain: Putative imidazole glycerol phosphate synthase subunit hisF2 (261 aa).

Residue aspartate 138 is part of the active site.

This sequence belongs to the HisA/HisF family. Heterodimer of HisH and HisF.

The protein localises to the cytoplasm. The catalysed reaction is 5-[(5-phospho-1-deoxy-D-ribulos-1-ylimino)methylamino]-1-(5-phospho-beta-D-ribosyl)imidazole-4-carboxamide + L-glutamine = D-erythro-1-(imidazol-4-yl)glycerol 3-phosphate + 5-amino-1-(5-phospho-beta-D-ribosyl)imidazole-4-carboxamide + L-glutamate + H(+). The protein operates within amino-acid biosynthesis; L-histidine biosynthesis; L-histidine from 5-phospho-alpha-D-ribose 1-diphosphate: step 5/9. Its function is as follows. IGPS catalyzes the conversion of PRFAR and glutamine to IGP, AICAR and glutamate. The HisF subunit catalyzes the cyclization activity that produces IGP and AICAR from PRFAR using the ammonia provided by the HisH subunit. This is Putative imidazole glycerol phosphate synthase subunit hisF2 (hisF2) from Prochlorococcus marinus (strain MIT 9313).